Reading from the N-terminus, the 330-residue chain is Tryptophan--tRNA ligase (330 aa).

Residues 10–12 (QAT) and 18–19 (GN) each bind ATP. Residues 11 to 19 (ATGSLHLGN) carry the 'HIGH' region motif. Residue aspartate 134 participates in L-tryptophan binding. Residues 146-148 (GED), isoleucine 186, and 195-199 (KMSKS) each bind ATP. Residues 195–199 (KMSKS) carry the 'KMSKS' region motif.

Belongs to the class-I aminoacyl-tRNA synthetase family. In terms of assembly, homodimer.

It is found in the cytoplasm. The enzyme catalyses tRNA(Trp) + L-tryptophan + ATP = L-tryptophyl-tRNA(Trp) + AMP + diphosphate + H(+). Catalyzes the attachment of tryptophan to tRNA(Trp). The protein is Tryptophan--tRNA ligase of Rickettsia felis (strain ATCC VR-1525 / URRWXCal2) (Rickettsia azadi).